A 251-amino-acid chain; its full sequence is Transcriptional regulator CBF1 (251 aa).

The tract at residues 1 to 169 (MVKSHKRTLE…VERKRRESIN (169 aa)) is disordered. Over residues 7 to 28 (RTLEKDEEHQEKKKANKISKDD) the composition is skewed to basic and acidic residues. Positions 40-56 (ASDSAHTDTATAAVAAV) are enriched in low complexity. The span at 67-76 (TESSTNQTSA) shows a compositional bias: polar residues. The span at 77–105 (LDKDDKETKDNLNPREETQSSHQEIDIPK) shows a compositional bias: basic and acidic residues. Polar residues predominate over residues 107 to 116 (QLTNQQNLAD). A compositionally biased stretch (low complexity) spans 117–126 (QHQQYQYHQQ). Positions 127 to 140 (LAQTNFKTEPTNSA) are enriched in polar residues. Residues 144–167 (HGSEEWHRQRRENHKEVERKRRES) are compositionally biased toward basic and acidic residues. Residues 152-200 (QRRENHKEVERKRRESINTGIRELARLIPTTDTNKAQILQRAVEYIKRL) form the bHLH domain. The stretch at 190–223 (LQRAVEYIKRLKENENNNIEKWTLEKLLTEQAVS) forms a coiled coil.

The protein resides in the nucleus. Functionally, transcription factor that binds ribosomal protein gene promoters and rDNA locus with TBF1. Necessary for the expression of genes involved in assimilation of inorganic sulfate. Also required for the expression of respiratory genes and glycolytic genes. Does not bind to centromeres and is not necessary for efficient chromosome segregationas as does S.cerevisiae CBF1. This chain is Transcriptional regulator CBF1 (CBF1), found in Candida albicans (strain SC5314 / ATCC MYA-2876) (Yeast).